Here is a 239-residue protein sequence, read N- to C-terminus: MTLALQYKRILLKVSGEALMGGQSFGIDVSVADRIAADIAEVRAIGVEVAIVIGGGNIFRGVAVASHGGDRVTGDHMGMLATAINSLALRTSLTKLGVETVVLSAIAMPQICESFSQRKAIGYMNQGRVVIFAGGTGNPFFTTDSAATLRAAEIGADVLLKGTQVDGIYSADPKTDPTAKRFDRLTHVEILQRGLSVMDTTAVTLARENNVPIIVYSIHEKSGLAKVLNGTGRFTIVSE.

13 to 16 (KVSG) is an ATP binding site. Gly55 is a UMP binding site. ATP contacts are provided by Gly56 and Arg60. UMP contacts are provided by residues Asp75 and 136–143 (TGNPFFTT). Residues Thr163, Gln164, Tyr169, and Asp172 each coordinate ATP.

The protein belongs to the UMP kinase family. In terms of assembly, homohexamer.

The protein resides in the cytoplasm. It carries out the reaction UMP + ATP = UDP + ADP. The protein operates within pyrimidine metabolism; CTP biosynthesis via de novo pathway; UDP from UMP (UMPK route): step 1/1. With respect to regulation, inhibited by UTP. Its function is as follows. Catalyzes the reversible phosphorylation of UMP to UDP. This is Uridylate kinase from Bartonella henselae (strain ATCC 49882 / DSM 28221 / CCUG 30454 / Houston 1) (Rochalimaea henselae).